Consider the following 475-residue polypeptide: CAAX prenyl protease 1 homolog (475 aa).

Residues 1–18 (MGMWASLDALWEMPAEKR) are Lumenal-facing. Residues 19–39 (IFGAVLLFSWTVYLWETFLAQ) traverse the membrane as a helical segment. Residues 40-81 (RQRRIYKTTTHVPPELGQIMDSETFEKSRLYQLDKSTFSFWS) lie on the Nuclear side of the membrane. The helical transmembrane segment at 82–102 (GLYSETEGTLILLFGGIPYLW) threads the bilayer. Residues 103-123 (RLSGRFCGYAGFGPEYEITQS) are Lumenal-facing. The chain crosses the membrane as a helical span at residues 124–144 (LVFLLLATLFSALTGLPWSLY). Over 145-170 (NTFVIEEKHGFNQQTLGFFMKDAIKK) the chain is Nuclear. Residues 171–191 (FVVTQCILLPVSSLLLYIIKI) form a helical membrane-spanning segment. Topologically, residues 192-195 (GGDY) are lumenal. Residues 196-216 (FFIYAWLFTLVVSLVLVTIYA) traverse the membrane as a helical segment. Over 217–347 (DYIAPLFDKF…GHWKLGHTVK (131 aa)) the chain is Nuclear. Zn(2+) is bound at residue histidine 335. Residue glutamate 336 is part of the active site. Histidine 339 lines the Zn(2+) pocket. The chain crosses the membrane as a helical span at residues 348 to 368 (NIIISQMNSFLCFFLFAVLIG). The Lumenal portion of the chain corresponds to 369–382 (RKELFAAFGFYDSQ). A helical transmembrane segment spans residues 383 to 405 (PTLIGLLIIFQFIFSPYNEVLSF). The Nuclear portion of the chain corresponds to 406–475 (CLTVLSRRFE…LQALKTMKQH (70 aa)). Glutamate 415 contacts Zn(2+).

This sequence belongs to the peptidase M48A family. Requires Zn(2+) as cofactor. As to expression, widely expressed. High levels in kidney, prostate, testis and ovary.

Its subcellular location is the endoplasmic reticulum membrane. The protein localises to the nucleus inner membrane. The protein resides in the early endosome membrane. It is found in the late endosome membrane. It catalyses the reaction Hydrolyzes the peptide bond -P2-(S-farnesyl or geranylgeranyl)C-P1'-P2'-P3'-COOH where P1' and P2' are amino acids with aliphatic side chains and P3' is any C-terminal residue.. Transmembrane metalloprotease whose catalytic activity is critical for processing lamin A/LMNA on the inner nuclear membrane and clearing clogged translocons on the endoplasmic reticulum. Proteolytically removes the C-terminal three residues of farnesylated proteins. Also plays an antiviral role independently of its protease activity by restricting enveloped RNA and DNA viruses, including influenza A, Zika, Ebola, Sindbis, vesicular stomatitis, cowpox, and vaccinia. Mechanistically, controls IFITM antiviral pathway to hinder viruses from breaching the endosomal barrier by modulating membrane fluidity. In Homo sapiens (Human), this protein is CAAX prenyl protease 1 homolog.